The following is a 133-amino-acid chain: Homeobox protein BarH-like 2 (133 aa).

Positions 1–46 (ELEKEFQKQKYLSTPDRLDLAQSLGLTQLQVKTWYQNRRMKWKKMV) form a DNA-binding region, homeobox. The tract at residues 45 to 133 (MVLKGGQEAP…VTSPEPPPSS (89 aa)) is disordered.

Belongs to the BAR homeobox family. As to expression, expressed in keratinizing epithelia such as wool follicle, tongue and esophagus. Expressed at low level in thymus. Not detected in spleen, skeletal muscle, brain, heart kidney, liver and lung.

It is found in the nucleus. In terms of biological role, transcription factor. Binds optimally to the DNA consensus sequence 5'-YYTAATGRTTTTY-3'. May control the expression of neural adhesion molecules such as L1 or Ng-CAM during embryonic development of both the central and peripherical nervous system. May be involved in controlling adhesive processes in keratinizing epithelia. This chain is Homeobox protein BarH-like 2 (BARX2), found in Ovis aries (Sheep).